A 197-amino-acid polypeptide reads, in one-letter code: dTTP/UTP pyrophosphatase (197 aa).

Residue D70 is the Proton acceptor of the active site.

This sequence belongs to the Maf family. YhdE subfamily. It depends on a divalent metal cation as a cofactor.

The protein localises to the cytoplasm. It catalyses the reaction dTTP + H2O = dTMP + diphosphate + H(+). The catalysed reaction is UTP + H2O = UMP + diphosphate + H(+). In terms of biological role, nucleoside triphosphate pyrophosphatase that hydrolyzes dTTP and UTP. May have a dual role in cell division arrest and in preventing the incorporation of modified nucleotides into cellular nucleic acids. The protein is dTTP/UTP pyrophosphatase of Pectobacterium atrosepticum (strain SCRI 1043 / ATCC BAA-672) (Erwinia carotovora subsp. atroseptica).